Reading from the N-terminus, the 642-residue chain is Threonine--tRNA ligase (642 aa).

A TGS domain is found at 1 to 61 (MPIITLPDGS…EHDASLEIIT (61 aa)). Residues 244-535 (DHRKIGKQLD…LIEEYAGFFP (292 aa)) form a catalytic region. Residues C335, H386, and H512 each contribute to the Zn(2+) site.

The protein belongs to the class-II aminoacyl-tRNA synthetase family. In terms of assembly, homodimer. Requires Zn(2+) as cofactor.

Its subcellular location is the cytoplasm. It catalyses the reaction tRNA(Thr) + L-threonine + ATP = L-threonyl-tRNA(Thr) + AMP + diphosphate + H(+). Functionally, catalyzes the attachment of threonine to tRNA(Thr) in a two-step reaction: L-threonine is first activated by ATP to form Thr-AMP and then transferred to the acceptor end of tRNA(Thr). Also edits incorrectly charged L-seryl-tRNA(Thr). The sequence is that of Threonine--tRNA ligase from Vibrio cholerae serotype O1 (strain ATCC 39541 / Classical Ogawa 395 / O395).